A 1593-amino-acid polypeptide reads, in one-letter code: ABC transporter C family member 8 (1593 aa).

10 helical membrane-spanning segments follow: residues 27–47 (VVMT…LYYL), 75–95 (VIVS…IVSI), 100–120 (FEIL…GLVY), 135–155 (LYWV…TLAI), 169–189 (FSYF…VLFF), 280–300 (FYIA…GPTL), 318–338 (YDGL…SLLL), 392–412 (LCPY…SLVL), 419–439 (ASVF…LAIS), and 505–525 (LLLW…VYIL). In terms of domain architecture, ABC transmembrane type-1 1 spans 280 to 561 (FYIAALFKII…LPSVVSSIIE (282 aa)). Residues 594–818 (VKIDNATLEW…GSHFTELMSH (225 aa)) form the ABC transporter 1 domain. ATP is bound at residue 627–634 (GQVGSGKS). The interval 816 to 938 (MSHDEQQQQL…PLQKGEKSSV (123 aa)) is disordered. Residues 844–875 (GDNKESENNEEQNEEEEGENENLLEKVLRKSR) adopt a coiled-coil conformation. Acidic residues predominate over residues 851–865 (NNEEQNEEEEGENEN). Positions 877–886 (RSPSPSSNRN) are enriched in low complexity. Positions 905–922 (EEDEQDERELMEDIDIDG) are enriched in acidic residues. The next 5 helical transmembrane spans lie at 1005 to 1025 (IGVL…LLSI), 1064 to 1084 (AKYY…ATFL), 1157 to 1177 (IIVI…VGAL), 1251 to 1271 (LAIR…LYTV), and 1280 to 1300 (GTAG…NWMV). The region spanning 1010 to 1308 (ATCIIGFYVL…MVRMSCDLEN (299 aa)) is the ABC transmembrane type-1 2 domain. In terms of domain architecture, ABC transporter 2 spans 1344 to 1578 (IVFKNLWLTY…QDSIYYSLVK (235 aa)). Residue 1378 to 1385 (GRTGAGKS) participates in ATP binding.

It belongs to the ABC transporter superfamily. ABCC family. Conjugate transporter (TC 3.A.1.208) subfamily.

The protein resides in the membrane. In Dictyostelium discoideum (Social amoeba), this protein is ABC transporter C family member 8 (abcC8).